Here is a 462-residue protein sequence, read N- to C-terminus: Cysteine--tRNA ligase (462 aa).

Cys27 contributes to the Zn(2+) binding site. Positions 29–39 (PTVYDLAHIGN) match the 'HIGH' region motif. Zn(2+) contacts are provided by Cys211, His236, and Glu240. The short motif at 270–274 (KMSKS) is the 'KMSKS' region element. Residue Lys273 participates in ATP binding.

The protein belongs to the class-I aminoacyl-tRNA synthetase family. In terms of assembly, monomer. It depends on Zn(2+) as a cofactor.

The protein localises to the cytoplasm. It carries out the reaction tRNA(Cys) + L-cysteine + ATP = L-cysteinyl-tRNA(Cys) + AMP + diphosphate. In Anaplasma phagocytophilum (strain HZ), this protein is Cysteine--tRNA ligase.